The following is a 512-amino-acid chain: Cytochrome P450 4d1 (512 aa).

Heme-binding residues include glutamate 316 and cysteine 456.

Belongs to the cytochrome P450 family. Heme serves as cofactor.

The protein localises to the endoplasmic reticulum membrane. Its subcellular location is the microsome membrane. Involved in the metabolism of insect hormones and in the breakdown of synthetic insecticides. This is Cytochrome P450 4d1 (Cyp4d1) from Drosophila melanogaster (Fruit fly).